The primary structure comprises 248 residues: Adenosylcobinamide-GDP ribazoletransferase (248 aa).

7 helical membrane passes run 24–44 (EINL…IGAW), 70–90 (IIIT…GLFS), 106–126 (VGAN…SLFL), 134–154 (IGWL…LLFA), 157–177 (TYAG…WWPV), 188–210 (LGLF…TIIY), and 228–248 (AGGQ…WGLI).

The protein belongs to the CobS family. The cofactor is Mg(2+).

It localises to the cell membrane. It catalyses the reaction alpha-ribazole + adenosylcob(III)inamide-GDP = adenosylcob(III)alamin + GMP + H(+). The catalysed reaction is alpha-ribazole 5'-phosphate + adenosylcob(III)inamide-GDP = adenosylcob(III)alamin 5'-phosphate + GMP + H(+). The protein operates within cofactor biosynthesis; adenosylcobalamin biosynthesis; adenosylcobalamin from cob(II)yrinate a,c-diamide: step 7/7. Functionally, joins adenosylcobinamide-GDP and alpha-ribazole to generate adenosylcobalamin (Ado-cobalamin). Also synthesizes adenosylcobalamin 5'-phosphate from adenosylcobinamide-GDP and alpha-ribazole 5'-phosphate. The chain is Adenosylcobinamide-GDP ribazoletransferase from Listeria monocytogenes serotype 4b (strain CLIP80459).